A 1512-amino-acid polypeptide reads, in one-letter code: Mitogen-activated protein kinase kinase kinase 1 (1512 aa).

Residues 1–13 (MAAAAGNRASSSG) show a composition bias toward low complexity. Disordered regions lie at residues 1 to 37 (MAAAAGNRASSSGFPGARATSPEAGGGGGALKASSAP), 67 to 181 (SVEL…DRPE), and 213 to 304 (VKPI…PEET). Ala-2 carries the post-translational modification N-acetylalanine. 2 positions are modified to phosphoserine: Ser-21 and Ser-35. Composition is skewed to low complexity over residues 81-99 (AASPPASSTSPSPEPADAA), 129-142 (AAPDSGASSPAAAE), and 150-160 (AAEPSPAAAPA). Ser-137 and Ser-154 each carry phosphoserine. A compositionally biased stretch (basic and acidic residues) spans 162–181 (REMENKETLKGLHKMDDRPE). Over residues 250-260 (SPSPGNSPSGR) the composition is skewed to low complexity. Ser-275 carries the post-translational modification Phosphoserine. Thr-285 bears the Phosphothreonine mark. Phosphoserine is present on residues Ser-292, Ser-297, and Ser-300. An SWIM-type zinc finger spans residues 338–366 (YRVFIGPQNCSCARGTFCIHLLFVMLRVF). Low complexity predominate over residues 416-433 (SNSHTLSSSSTSTSSSEN). The interval 416 to 436 (SNSHTLSSSSTSTSSSENSIK) is disordered. An RING-type zinc finger spans residues 443 to 492 (CPICLLGMLDEESLTVCEDGCRNKLHHHCMSIWAEECRRNREPLICPLCR). 2 positions are modified to phosphoserine: Ser-507 and Ser-531. Disordered regions lie at residues 511–532 (SPSSLRAAQQQTVQQQPLAGSR) and 602–624 (STGNSGGSSGSSPSGGATSGSSQ). Residues 611–624 (GSSPSGGATSGSSQ) show a composition bias toward low complexity. Ser-923 carries the post-translational modification Phosphoserine. A disordered region spans residues 933–972 (SISVGPSSSTTTTTTTTEQPKPMVQTKGRPHSQCLNSSPL). The span at 939–949 (SSSTTTTTTTT) shows a compositional bias: low complexity. The residue at position 1018 (Ser-1018) is a Phosphoserine. The span at 1032–1041 (NCPENKDSDK) shows a compositional bias: basic and acidic residues. The tract at residues 1032-1087 (NCPENKDSDKLSPVFTQSRPLPSSNIHRPKPSRPTPGNTSKQGDPSKNSMTLDLNS) is disordered. Phosphoserine is present on Ser-1043. Polar residues-rich tracts occupy residues 1045–1057 (VFTQSRPLPSSNI) and 1066–1087 (TPGNTSKQGDPSKNSMTLDLNS). Residues 1243–1508 (WLKGQQIGLG…SRELLKHPVF (266 aa)) enclose the Protein kinase domain. ATP contacts are provided by residues 1249–1257 (IGLGAFSSC) and Lys-1272. Asp-1369 acts as the Proton acceptor in catalysis. Residues Thr-1400 and Thr-1412 each carry the phosphothreonine; by autocatalysis modification.

Belongs to the protein kinase superfamily. STE Ser/Thr protein kinase family. MAP kinase kinase kinase subfamily. As to quaternary structure, binds both upstream activators and downstream substrates in multimolecular complexes through its N-terminus. Oligomerizes after binding MAP2K4 or TRAF2. Interacts with AXIN1. Interacts (via the kinase catalytic domain) with STK38. Interacts with GRIPAP1. It depends on Mg(2+) as a cofactor. In terms of processing, autophosphorylated.

It catalyses the reaction L-seryl-[protein] + ATP = O-phospho-L-seryl-[protein] + ADP + H(+). The catalysed reaction is L-threonyl-[protein] + ATP = O-phospho-L-threonyl-[protein] + ADP + H(+). It carries out the reaction S-ubiquitinyl-[E2 ubiquitin-conjugating enzyme]-L-cysteine + [acceptor protein]-L-lysine = [E2 ubiquitin-conjugating enzyme]-L-cysteine + N(6)-ubiquitinyl-[acceptor protein]-L-lysine.. Activated by autophosphorylation on Thr-1400 and Thr-1412 following oligomerization. Its function is as follows. Component of a protein kinase signal transduction cascade. Activates the ERK and JNK kinase pathways by phosphorylation of MAP2K1 and MAP2K4. May phosphorylate the MAPK8/JNK1 kinase. Activates CHUK and IKBKB, the central protein kinases of the NF-kappa-B pathway. The polypeptide is Mitogen-activated protein kinase kinase kinase 1 (MAP3K1) (Homo sapiens (Human)).